We begin with the raw amino-acid sequence, 505 residues long: Cytochrome P450 9b2 (505 aa).

Heme is bound at residue cysteine 449.

It belongs to the cytochrome P450 family. The cofactor is heme.

It localises to the endoplasmic reticulum membrane. The protein resides in the microsome membrane. Its function is as follows. May be involved in the metabolism of insect hormones and in the breakdown of synthetic insecticides. In Drosophila melanogaster (Fruit fly), this protein is Cytochrome P450 9b2 (Cyp9b2).